The chain runs to 407 residues: 3-oxoacyl-[acyl-carrier-protein] synthase 1 (407 aa).

The region spanning 1 to 406 (MKRVVITGFG…GTNVSLILKK (406 aa)) is the Ketosynthase family 3 (KS3) domain. Residues Cys-164, His-300, and His-336 each act as for beta-ketoacyl synthase activity in the active site.

This sequence belongs to the thiolase-like superfamily. Beta-ketoacyl-ACP synthases family. In terms of assembly, homodimer.

Its subcellular location is the cytoplasm. It catalyses the reaction a fatty acyl-[ACP] + malonyl-[ACP] + H(+) = a 3-oxoacyl-[ACP] + holo-[ACP] + CO2. The catalysed reaction is (3Z)-decenoyl-[ACP] + malonyl-[ACP] + H(+) = 3-oxo-(5Z)-dodecenoyl-[ACP] + holo-[ACP] + CO2. It participates in lipid metabolism; fatty acid biosynthesis. In terms of biological role, involved in the type II fatty acid elongation cycle. Catalyzes the elongation of a wide range of acyl-ACP by the addition of two carbons from malonyl-ACP to an acyl acceptor. Can also use unsaturated fatty acids. Catalyzes a key reaction in unsaturated fatty acid (UFA) synthesis, the elongation of the cis-3-decenoyl-ACP produced by FabA. In Buchnera aphidicola subsp. Schizaphis graminum (strain Sg), this protein is 3-oxoacyl-[acyl-carrier-protein] synthase 1 (fabB).